The primary structure comprises 318 residues: MTLQYYTLNNGRKIPAIGMGCWKLENAADMVYAAIKEGYRLFDCACDYGNEKEVGEGINRAIKDGLVKRKDLFITSKLWNNFHAKENVKKALMKSLSDFNLDYFDLYLMHFPISFKFVPFEEKYPPGFYCGDGDKFIYEDVPIIETWRAMENLVDEGLVKSIGVSNVSGGLLEDLIKAARIKPASLQIEHHPYLQQNKLVEYAQLKGIVVTGYSNFGPLSFLELGNETAKKTQPLYENKTITTIAAKHGKTPFQVLLRWVNQRGIAIIPKSTFPNTLAVNLHVDEFDLTKEDFEEIAKLDRHLRFNDPWTWDKIPTFV.

Y48 (proton donor) is an active-site residue. Residue H110 coordinates substrate. NAD(+) contacts are provided by residues 165–166 (SN), 214–223 (SNFGPLSFLE), and 270–280 (KSTFPNTLAVN).

This sequence belongs to the aldo/keto reductase family.

The catalysed reaction is xylitol + NAD(+) = D-xylose + NADH + H(+). The enzyme catalyses xylitol + NADP(+) = D-xylose + NADPH + H(+). It functions in the pathway carbohydrate metabolism; D-xylose degradation. Reduces D-xylose into xylitol. Has a preference for NADPH, but can also utilize NADH as cosubstrate. This is NAD(P)H-dependent D-xylose reductase (XYL1) from Pachysolen tannophilus (Yeast).